Consider the following 381-residue polypeptide: Glycerate kinase (381 aa).

It belongs to the glycerate kinase type-1 family.

The catalysed reaction is (R)-glycerate + ATP = (2R)-3-phosphoglycerate + ADP + H(+). The chain is Glycerate kinase (glxK) from Bacillus cereus (strain ATCC 10987 / NRS 248).